A 575-amino-acid chain; its full sequence is MLGVLVLGALALAGLGFPAPAEPQPGGSQCVEHDCFALYPGPATFLNASQICDGLRGHLMTVRSSVAADVISLLLNGDGGVGRRRLWIGLQLPPGCGDPKRLGPLRGFQWVTGDNNTSYSRWARLDLNGAPLCGPLCVAVSAAEATVPSEPIWEEQQCEVKADGFLCEFHFPATCRPLAVEPGAAAAAVSITYGTPFAARGADFQALPVGSSAAVAPLGLQLMCTAPPGAVQGHWAREAPGAWDCSVENGGCEHACNAIPGAPRCQCPAGAALQADGRSCTASATQSCNDLCEHFCVPNPDQPGSYSCMCETGYRLAADQHRCEDVDDCILEPSPCPQRCVNTQGGFECHCYPNYDLVDGECVEPVDPCFRANCEYQCQPLNQTSYLCVCAEGFAPIPHEPHRCQMFCNQTACPADCDPNTQASCECPEGYILDDGFICTDIDECENGGFCSGVCHNLPGTFECICGPDSALARHIGTDCDSGKVDGGDSGSGEPPPSPTPGSTLTPPAVGLVHSGLLIGISIASLCLVVALLALLCHLRKKQGAARAKMEYKCAAPSKEVVLQHVRTERTPQRL.

The signal sequence occupies residues 1–18 (MLGVLVLGALALAGLGFP). At 19-515 (APAEPQPGGS…TPPAVGLVHS (497 aa)) the chain is on the extracellular side. Residues 31–169 (VEHDCFALYP…VKADGFLCEF (139 aa)) enclose the C-type lectin domain. N-linked (GlcNAc...) asparagine glycans are attached at residues Asn47, Asn115, and Asn116. Cystine bridges form between Cys137–Cys158, Cys245–Cys256, Cys252–Cys265, Cys267–Cys280, Cys288–Cys296, Cys292–Cys308, Cys310–Cys323, Cys329–Cys340, Cys336–Cys349, Cys351–Cys362, Cys369–Cys378, Cys374–Cys388, Cys390–Cys404, Cys408–Cys413, Cys417–Cys425, Cys427–Cys439, Cys445–Cys455, Cys451–Cys464, and Cys466–Cys480. EGF-like domains are found at residues 241-281 (GAWD…RSCT) and 284-324 (ATQS…HRCE). The 39-residue stretch at 325–363 (DVDDCILEPSPCPQRCVNTQGGFECHCYPNYDLVDGECV) folds into the EGF-like 3; calcium-binding domain. Asn342 carries the (3R)-3-hydroxyasparagine modification. EGF-like domains are found at residues 365-405 (PVDP…HRCQ) and 404-440 (CQMF…FICT). N-linked (GlcNAc...) asparagine glycosylation is present at Asn382. Asn409 carries N-linked (GlcNAc...) asparagine glycosylation. Residues 441-481 (DIDECENGGFCSGVCHNLPGTFECICGPDSALARHIGTDCD) form the EGF-like 6; calcium-binding domain. The segment at 481-515 (DSGKVDGGDSGSGEPPPSPTPGSTLTPPAVGLVHS) is involved in alpha-L/beta-2 and alpha-M/beta-2 integrin binding. The tract at residues 484-506 (KVDGGDSGSGEPPPSPTPGSTLT) is disordered. O-linked (Xyl...) (chondroitin sulfate) serine glycans are attached at residues Ser490 and Ser492. A helical membrane pass occupies residues 516–539 (GLLIGISIASLCLVVALLALLCHL). At 540-575 (RKKQGAARAKMEYKCAAPSKEVVLQHVRTERTPQRL) the chain is on the cytoplasmic side.

As to quaternary structure, interacts with ITGAL, ITGAM and ITGB2. Interacts with thrombin/F2; this interaction switches the specificity of thrombin from a procoagulant to an anticoagulant and antifibrinolytic protease. Interacts with ANGP1 and ANGP2; these interactions significantly inhibit the generation of activated PC and TAFIa/CPB2 by the thrombin/thrombomodulin complex. Interacts with PF4; this interaction enhances generation of activated protein C. Interacts with HMGB1; this interaction inhibits HMGB1 inflammatory activity. N-glycosylated. In terms of processing, the iron and 2-oxoglutarate dependent 3-hydroxylation of aspartate and asparagine is (R) stereospecific within EGF domains. In terms of tissue distribution, endothelial cells are unique in synthesizing thrombomodulin.

It is found in the membrane. Functionally, endothelial cell receptor that plays a critical role in regulating several physiological processes including hemostasis, coagulation, fibrinolysis, inflammation, and angiogenesis. Acts as a cofactor for thrombin activation of protein C/PROC on the surface of vascular endothelial cells leading to initiation of the activated protein C anticoagulant pathway. Also accelerates the activation of the plasma carboxypeptidase B2/CPB2, which catalyzes removal of C-terminal basic amino acids from its substrates including kinins or anaphylatoxins leading to fibrinolysis inhibition. Plays critical protective roles in changing the cleavage specificity of protease-activated receptor 1/PAR1, inhibiting endothelial cell permeability and inflammation. Suppresses inflammation distinctly from its anticoagulant cofactor activity by sequestering HMGB1 thereby preventing it from engaging cellular receptors such as RAGE and contributing to the inflammatory response. This is Thrombomodulin (THBD) from Homo sapiens (Human).